Consider the following 111-residue polypeptide: Prothymosin alpha (111 aa).

Met1 bears the N-acetylmethionine mark. The segment at 1–111 is disordered; that stretch reads MSDAAVDTSS…TKKQKTEEDD (111 aa). Ser2 carries the post-translational modification N-acetylserine; in Prothymosin alpha, N-terminally processed. The residue at position 2 (Ser2) is a Phosphoserine. Residue Thr8 is modified to Phosphothreonine. Residues Ser9 and Ser10 each carry the phosphoserine modification. Phosphothreonine is present on residues Thr13 and Thr14. The span at 13–31 shows a compositional bias: basic and acidic residues; the sequence is TTKDLKEKKEVVEEAENGR. At Lys15 the chain carries N6-acetyllysine; alternate. Lys15 is subject to N6-succinyllysine; alternate. Residues 43-84 are compositionally biased toward acidic residues; that stretch reads ENGEQEADNEVDEEEEEGGEEEEEEEEGDGEEEDGDEDEEAE. Residues 101-111 are compositionally biased toward basic and acidic residues; sequence DTKKQKTEEDD. Residue Thr102 is modified to Phosphothreonine. Lys103 is modified (N6-acetyllysine; alternate). Lys103 is covalently cross-linked (Glycyl lysine isopeptide (Lys-Gly) (interchain with G-Cter in SUMO2); alternate). The residue at position 107 (Thr107) is a Phosphothreonine.

The protein belongs to the pro/parathymosin family. Interacts with NUPR1; regulates apoptotic process. Covalently linked to a small RNA of about 20 nucleotides.

Its subcellular location is the nucleus. Functionally, prothymosin alpha may mediate immune function by conferring resistance to certain opportunistic infections. This chain is Prothymosin alpha (Ptma), found in Mus musculus (Mouse).